The sequence spans 520 residues: MRTFKSLMISLCMGTTLCMCLPQTTTAQTVSSGDSWTWDKGTIVIDTPERPTGQKSVLGLTTPKMEVVRVGFVGLGMRGPGAVERFTYIPGTQIVALCDYEASRAEKCQDILKKASMPKAAIYSGEKGYEELCKRTDIDLVYIAADWLHHFPVAKCALENGKNVAIEVPSAMNLQECWDLINLSEKTRKHCMILENCCYDWFEMNTLNMAQQGVFGEVIRAQGAYIHNLSPFWDHYWKNGKEDKLGWRLDYNMKHRGDVYATHGLGPVAQALDIHRGDRITTLVAMDTKSVVGKDLVEKRTGEECKEFRNGDHTTTLLRTANGKVIEIQHNVMTPQPYNRLYQLTGSKGFANKYPVEGYALDAAQLTASGVQPKVDDLNSHGFLPQAEMEALVEKYQHPILKKYGEMAKEVGGHGGMDFIMDSRLVYCLQNGLPLDMDVYDLAEWCCLAELGAISMDNGCAAVAFPDFTRGEWNVTKGYKHAYASPEDENANMEKAKAFTAKLKEQGAKEWAKEAKKKKK.

A signal peptide spans 1–27; sequence MRTFKSLMISLCMGTTLCMCLPQTTTA. NAD(+)-binding positions include 77–78, D99, 147–150, 167–168, and N196; these read MR, WLHH, and EV. Substrate is bound by residues Y225, R248, 260 to 263, and Y338; that span reads YATH. Y260 is an NAD(+) binding site.

The protein belongs to the Gfo/Idh/MocA family. Glycosyl hydrolase 109 subfamily. NAD(+) is required as a cofactor.

Its function is as follows. Glycosidase. This is Glycosyl hydrolase family 109 protein 5 from Phocaeicola vulgatus (strain ATCC 8482 / DSM 1447 / JCM 5826 / CCUG 4940 / NBRC 14291 / NCTC 11154) (Bacteroides vulgatus).